We begin with the raw amino-acid sequence, 186 residues long: GTP cyclohydrolase 1 1 (186 aa).

The protein belongs to the GTP cyclohydrolase I family. Homomer.

It carries out the reaction GTP + H2O = 7,8-dihydroneopterin 3'-triphosphate + formate + H(+). Its pathway is cofactor biosynthesis; 7,8-dihydroneopterin triphosphate biosynthesis; 7,8-dihydroneopterin triphosphate from GTP: step 1/1. The sequence is that of GTP cyclohydrolase 1 1 (folE1) from Pseudomonas aeruginosa (strain ATCC 15692 / DSM 22644 / CIP 104116 / JCM 14847 / LMG 12228 / 1C / PRS 101 / PAO1).